Reading from the N-terminus, the 294-residue chain is NAD kinase (294 aa).

Residue Asp74 is the Proton acceptor of the active site. NAD(+) is bound by residues Asp74 to Gly75, Arg79, Asn149 to Glu150, Asp179, Thr190 to Ser195, and Ala214.

This sequence belongs to the NAD kinase family. A divalent metal cation is required as a cofactor.

The protein localises to the cytoplasm. It carries out the reaction NAD(+) + ATP = ADP + NADP(+) + H(+). In terms of biological role, involved in the regulation of the intracellular balance of NAD and NADP, and is a key enzyme in the biosynthesis of NADP. Catalyzes specifically the phosphorylation on 2'-hydroxyl of the adenosine moiety of NAD to yield NADP. The protein is NAD kinase of Flavobacterium johnsoniae (strain ATCC 17061 / DSM 2064 / JCM 8514 / BCRC 14874 / CCUG 350202 / NBRC 14942 / NCIMB 11054 / UW101) (Cytophaga johnsonae).